We begin with the raw amino-acid sequence, 357 residues long: Putative lipopolysaccharide heptosyltransferase 4 (357 aa).

The catalysed reaction is alpha-D-Glc-(1-&gt;2)-alpha-D-Glc-(1-&gt;3)-[alpha-D-Gal-(1-&gt;6)]-alpha-D-Glc-(1-&gt;3)-[L-alpha-D-Hep-(1-&gt;7)]-4-O-PO3(2-)-L-alpha-D-Hep-(1-&gt;3)-4-O-PO3(2-)-L-alpha-D-Hep-(1-&gt;5)-[alpha-Kdo-(2-&gt;4)]-alpha-Kdo-(2-&gt;6)-lipid A + ADP-L-glycero-beta-D-manno-heptose = lipid A-core + ADP + H(+). Its pathway is bacterial outer membrane biogenesis; LPS core biosynthesis. In terms of biological role, transferase involved in the biosynthesis of the core oligosaccharide region of lipopolysaccharide (LPS). May catalyze the addition of the terminal heptose (heptose IV) to the outer-core glucose III, the last step of the lipid A-core oligosaccharide biosynthesis. The chain is Putative lipopolysaccharide heptosyltransferase 4 from Escherichia coli (strain K12).